The sequence spans 235 residues: Putative HAD-hydrolase YfnB (235 aa).

The Nucleophile role is filled by aspartate 10.

The protein belongs to the HAD-like hydrolase superfamily. YjjG family.

This is Putative HAD-hydrolase YfnB (yfnB) from Bacillus subtilis (strain 168).